A 167-amino-acid polypeptide reads, in one-letter code: Large ribosomal subunit protein uL10 (167 aa).

It belongs to the universal ribosomal protein uL10 family. In terms of assembly, part of the ribosomal stalk of the 50S ribosomal subunit. The N-terminus interacts with L11 and the large rRNA to form the base of the stalk. The C-terminus forms an elongated spine to which L12 dimers bind in a sequential fashion forming a multimeric L10(L12)X complex.

Its function is as follows. Forms part of the ribosomal stalk, playing a central role in the interaction of the ribosome with GTP-bound translation factors. In Lactiplantibacillus plantarum (strain ATCC BAA-793 / NCIMB 8826 / WCFS1) (Lactobacillus plantarum), this protein is Large ribosomal subunit protein uL10.